A 212-amino-acid polypeptide reads, in one-letter code: uncharacterized protein (212 aa).

S-adenosyl-L-methionine is bound by residues Gly-53, Glu-74, and Asp-97.

The protein belongs to the methyltransferase superfamily. YrrT family.

Could be a S-adenosyl-L-methionine-dependent methyltransferase. This is an uncharacterized protein from Bacillus mycoides (strain KBAB4) (Bacillus weihenstephanensis).